The following is an 828-amino-acid chain: Cadherin-22 (828 aa).

A signal peptide spans 1 to 34; it reads MRPRPEGRGLRAGVALSPALLLLLLLPPPPTLLG. Residues 36-624 are Extracellular-facing; that stretch reads LWAAGTPSPS…AFVMAASLSP (589 aa). Cadherin domains lie at 64 to 168, 169 to 277, 278 to 394, 395 to 498, and 499 to 616; these read WVWN…EPRF, LHGP…PPRF, PQKM…PPEF, RPPS…NPPE, and LATP…TTAF. N162 carries an N-linked (GlcNAc...) asparagine glycan. N-linked (GlcNAc...) asparagine glycans are attached at residues N466 and N612. The helical transmembrane segment at 625–645 threads the bilayer; sequence GALIALLVCVLILVVLVLLIL. At 646–828 the chain is on the cytoplasmic side; sequence TLRRHHKSHL…HRGDDEAQAS (183 aa). The segment covering 702-719 has biased composition (gly residues); that stretch reads GGGSAGGGAGGGSGGGAG. Positions 702–745 are disordered; sequence GGGSAGGGAGGGSGGGAGSPPQAHLPSERHSLPQGPPSPEPDFS.

The protein localises to the cell membrane. Its function is as follows. Cadherins are calcium-dependent cell adhesion proteins. They preferentially interact with themselves in a homophilic manner in connecting cells; cadherins may thus contribute to the sorting of heterogeneous cell types. PB-cadherins may have a role in the morphological organization of pituitary gland and brain tissues. The protein is Cadherin-22 (CDH22) of Homo sapiens (Human).